We begin with the raw amino-acid sequence, 75 residues long: Exodeoxyribonuclease 7 small subunit (75 aa).

It belongs to the XseB family. In terms of assembly, heterooligomer composed of large and small subunits.

The protein localises to the cytoplasm. It catalyses the reaction Exonucleolytic cleavage in either 5'- to 3'- or 3'- to 5'-direction to yield nucleoside 5'-phosphates.. Bidirectionally degrades single-stranded DNA into large acid-insoluble oligonucleotides, which are then degraded further into small acid-soluble oligonucleotides. The chain is Exodeoxyribonuclease 7 small subunit from Thermotoga maritima (strain ATCC 43589 / DSM 3109 / JCM 10099 / NBRC 100826 / MSB8).